The following is a 331-amino-acid chain: Malate dehydrogenase (331 aa).

14-20 contacts NAD(+); it reads GAAGSIG. Substrate contacts are provided by R95 and R101. Residues N108, Q115, and 132-134 contribute to the NAD(+) site; that span reads VGN. 2 residues coordinate substrate: N134 and R165. The Proton acceptor role is filled by H190.

This sequence belongs to the LDH/MDH superfamily. MDH type 2 family.

It carries out the reaction (S)-malate + NAD(+) = oxaloacetate + NADH + H(+). Its function is as follows. Catalyzes the reversible oxidation of malate to oxaloacetate. In Rhodococcus jostii (strain RHA1), this protein is Malate dehydrogenase.